The primary structure comprises 484 residues: Cobyric acid synthase (484 aa).

Positions 251–438 constitute a GATase cobBQ-type domain; the sequence is ALKIAVPVLS…LHGLFGNDEY (188 aa). The active-site Nucleophile is Cys-333. His-430 is a catalytic residue.

This sequence belongs to the CobB/CobQ family. CobQ subfamily.

Its pathway is cofactor biosynthesis; adenosylcobalamin biosynthesis. In terms of biological role, catalyzes amidations at positions B, D, E, and G on adenosylcobyrinic A,C-diamide. NH(2) groups are provided by glutamine, and one molecule of ATP is hydrogenolyzed for each amidation. The sequence is that of Cobyric acid synthase from Allorhizobium ampelinum (strain ATCC BAA-846 / DSM 112012 / S4) (Agrobacterium vitis (strain S4)).